The primary structure comprises 132 residues: Small ribosomal subunit protein uS8c (132 aa).

Belongs to the universal ribosomal protein uS8 family. As to quaternary structure, part of the 30S ribosomal subunit.

The protein resides in the plastid. It is found in the chloroplast. Its function is as follows. One of the primary rRNA binding proteins, it binds directly to 16S rRNA central domain where it helps coordinate assembly of the platform of the 30S subunit. This Buxus microphylla (Littleleaf boxwood) protein is Small ribosomal subunit protein uS8c (rps8).